The following is a 70-amino-acid chain: Small, acid-soluble spore protein 1 (70 aa).

Belongs to the alpha/beta-type SASP family.

Functionally, SASP are bound to spore DNA. They are double-stranded DNA-binding proteins that cause DNA to change to an a-like conformation. They protect the DNA backbone from chemical and enzymatic cleavage and are thus involved in dormant spore's high resistance to UV light. This is Small, acid-soluble spore protein 1 (sasP-1) from Geobacillus stearothermophilus (Bacillus stearothermophilus).